We begin with the raw amino-acid sequence, 606 residues long: V-type proton ATPase catalytic subunit A (606 aa).

239–246 is an ATP binding site; sequence GAFGCGKT.

This sequence belongs to the ATPase alpha/beta chains family. As to quaternary structure, V-ATPase is a heteromultimeric enzyme made up of two complexes: the ATP-hydrolytic V1 complex and the proton translocation V0 complex. The V1 complex consists of three catalytic AB heterodimers that form a heterohexamer, three peripheral stalks each consisting of EG heterodimers, one central rotor including subunits D and F, and the regulatory subunits C and H. The proton translocation complex V0 consists of the proton transport subunit a, a ring of proteolipid subunits c9c'', rotary subunit d, subunits e and f, and the accessory subunits vah-19/Ac45 and vah-20/PRR.

It catalyses the reaction ATP + H2O + 4 H(+)(in) = ADP + phosphate + 5 H(+)(out). In terms of biological role, catalytic subunit of the V1 complex of vacuolar(H+)-ATPase (V-ATPase), a multisubunit enzyme composed of a peripheral complex (V1) that hydrolyzes ATP and a membrane integral complex (V0) that translocates protons. V-ATPase is responsible for acidifying and maintaining the pH of intracellular compartments and in some cell types, is targeted to the plasma membrane, where it is responsible for acidifying the extracellular environment. Required along with other vacuolar ATPase components for the removal of protein aggregates which form in immature oocytes in the distal gonad. This removal occurs as the oocytes mature and move to the proximal gonad, is triggered by the introduction of sperm through mating and occurs before fertilization. The introduction of sperm triggers V-ATPase accumulation in proximal oocytes and induces lysosomal acidification which leads to engulfing of protein aggregates by lysosomes and subsequent clearance of the aggregates. Lysosomal acidification also leads to changes in mitochondrial morphology and function. Mitochondria in distal immature oocytes are fragmented, produce high levels of reactive oxygen species (ROS) and have high membrane potential, indicative of metabolic inactivity. In contrast, mitochondria in proximal mature oocytes are tubular with lower ROS levels and membrane potential, indicative of an active metabolic state required for aggregate mobilization before clearance. Involved in receptor-mediated endocytosis. The chain is V-type proton ATPase catalytic subunit A from Caenorhabditis briggsae.